The sequence spans 704 residues: Cystathionine beta-synthase cbs-1 (704 aa).

Residues asparagine 454, 562 to 566 (GTGGT), and serine 652 contribute to the pyridoxal 5'-phosphate site.

The protein belongs to the cysteine synthase/cystathionine beta-synthase family. As to quaternary structure, monomer. In terms of assembly, does not bind pyridoxal 5'-phosphate, PLP; which may explain why this isoform has virtually undetectable catalytic activity. Requires pyridoxal 5'-phosphate as cofactor.

Its subcellular location is the cytoplasm. It carries out the reaction L-homocysteine + L-serine = L,L-cystathionine + H2O. Its pathway is amino-acid biosynthesis; L-cysteine biosynthesis; L-cysteine from L-homocysteine and L-serine: step 1/2. Functionally, hydro-lyase catalyzing the first step of the transsulfuration pathway, where the hydroxyl group of L-serine is displaced by L-homocysteine in a beta-replacement reaction to form L-cystathionine, the precursor of L-cysteine. Plays a role in maintaining homocysteine homeostasis. Involved in cold-induced somatic longevity mediated by prostaglandin E2 (PGE2) signals from adult germ cells, perhaps acting via a role in the production of hydrogen sulfide (H2S). Required for normal development. In Caenorhabditis elegans, this protein is Cystathionine beta-synthase cbs-1.